Here is a 165-residue protein sequence, read N- to C-terminus: Type VI lipase immunity protein Tli3 (165 aa).

The N-terminal stretch at 1 to 21 (MKCKTLLIACLFGLGSAQALA) is a signal peptide.

As to quaternary structure, interacts with the Tle3 toxin.

The protein resides in the periplasm. In terms of biological role, immunity protein that neutralizes the toxicity of the P.aeruginosa antibacterial toxin Tle3 in the periplasm to protect the cell from fratricide intoxication. This is Type VI lipase immunity protein Tli3 from Pseudomonas aeruginosa (strain ATCC 15692 / DSM 22644 / CIP 104116 / JCM 14847 / LMG 12228 / 1C / PRS 101 / PAO1).